Consider the following 260-residue polypeptide: Snake venom serine protease homolog (260 aa).

Residues 1 to 18 (MVLIRVLANLLILQLSYA) form the signal peptide. Positions 19 to 24 (QKASEL) are excised as a propeptide. A Peptidase S1 domain is found at 25-251 (IIGGDECNIN…YTEWIRSIIA (227 aa)). Disulfide bonds link C31–C165, C52–C68, C100–C258, C144–C212, C176–C191, and C202–C227. N83 carries an N-linked (GlcNAc...) asparagine glycan.

The protein belongs to the peptidase S1 family. Snake venom subfamily. Expressed by the venom gland.

The protein resides in the secreted. Its function is as follows. Snake venom serine protease homolog that may act in the hemostasis system of the prey. The sequence is that of Snake venom serine protease homolog from Bothrops jararacussu (Jararacussu).